Reading from the N-terminus, the 1373-residue chain is DNA-directed RNA polymerase subunit beta (1373 aa).

It belongs to the RNA polymerase beta chain family. The RNAP catalytic core consists of 2 alpha, 1 beta, 1 beta' and 1 omega subunit. When a sigma factor is associated with the core the holoenzyme is formed, which can initiate transcription.

The catalysed reaction is RNA(n) + a ribonucleoside 5'-triphosphate = RNA(n+1) + diphosphate. In terms of biological role, DNA-dependent RNA polymerase catalyzes the transcription of DNA into RNA using the four ribonucleoside triphosphates as substrates. In Rickettsia massiliae (strain Mtu5), this protein is DNA-directed RNA polymerase subunit beta.